A 36-amino-acid chain; its full sequence is Photosystem I reaction center subunit VIII (36 aa).

Residues 8–28 (SIFVPLVGLVFPAIAMASLFL) traverse the membrane as a helical segment.

It belongs to the PsaI family.

It is found in the plastid. It localises to the chloroplast thylakoid membrane. Functionally, may help in the organization of the PsaL subunit. The protein is Photosystem I reaction center subunit VIII of Solanum bulbocastanum (Wild potato).